The following is a 297-amino-acid chain: 4-hydroxy-tetrahydrodipicolinate synthase (297 aa).

Thr-47 provides a ligand contact to pyruvate. The active-site Proton donor/acceptor is Tyr-136. Lys-165 functions as the Schiff-base intermediate with substrate in the catalytic mechanism. Position 206 (Ile-206) interacts with pyruvate.

It belongs to the DapA family. As to quaternary structure, homotetramer; dimer of dimers.

The protein resides in the cytoplasm. It catalyses the reaction L-aspartate 4-semialdehyde + pyruvate = (2S,4S)-4-hydroxy-2,3,4,5-tetrahydrodipicolinate + H2O + H(+). Its pathway is amino-acid biosynthesis; L-lysine biosynthesis via DAP pathway; (S)-tetrahydrodipicolinate from L-aspartate: step 3/4. Its function is as follows. Catalyzes the condensation of (S)-aspartate-beta-semialdehyde [(S)-ASA] and pyruvate to 4-hydroxy-tetrahydrodipicolinate (HTPA). This Campylobacter fetus subsp. fetus (strain 82-40) protein is 4-hydroxy-tetrahydrodipicolinate synthase.